The chain runs to 294 residues: tRNA dimethylallyltransferase (294 aa).

Position 11–18 (11–18) interacts with ATP; that stretch reads GPTAVGKT. Residue 13–18 coordinates substrate; sequence TAVGKT. The interaction with substrate tRNA stretch occupies residues 36 to 39; it reads DSQQ.

It belongs to the IPP transferase family. Monomer. Mg(2+) is required as a cofactor.

It carries out the reaction adenosine(37) in tRNA + dimethylallyl diphosphate = N(6)-dimethylallyladenosine(37) in tRNA + diphosphate. Catalyzes the transfer of a dimethylallyl group onto the adenine at position 37 in tRNAs that read codons beginning with uridine, leading to the formation of N6-(dimethylallyl)adenosine (i(6)A). The polypeptide is tRNA dimethylallyltransferase (Lactococcus lactis subsp. cremoris (strain MG1363)).